A 141-amino-acid polypeptide reads, in one-letter code: Large ribosomal subunit protein bL21 (141 aa).

A disordered region spans residues 111-141; sequence ATAPSRTEAAPESNPEAAPSAAATGIPADEE. Positions 118–133 are enriched in low complexity; sequence EAAPESNPEAAPSAAA.

The protein belongs to the bacterial ribosomal protein bL21 family. In terms of assembly, part of the 50S ribosomal subunit. Contacts protein L20.

This protein binds to 23S rRNA in the presence of protein L20. This chain is Large ribosomal subunit protein bL21, found in Synechococcus sp. (strain JA-2-3B'a(2-13)) (Cyanobacteria bacterium Yellowstone B-Prime).